A 406-amino-acid polypeptide reads, in one-letter code: UPF0754 membrane protein CYA_0973 (406 aa).

2 helical membrane passes run 1-21 (MALWIYVVPPLAGLVIGYFTN) and 385-405 (IVNLGGLLGFLVGCVQVLFLL).

The protein belongs to the UPF0754 family.

It localises to the cell inner membrane. This is UPF0754 membrane protein CYA_0973 from Synechococcus sp. (strain JA-3-3Ab) (Cyanobacteria bacterium Yellowstone A-Prime).